The chain runs to 331 residues: Ribosomal RNA small subunit methyltransferase H (331 aa).

S-adenosyl-L-methionine-binding positions include 48–50 (GGH), D67, D115, and Q122. The tract at residues 297–331 (RGTEKPTEEEISENRRASSAKVRAVEKIRTSRTTA) is disordered. Over residues 298-312 (GTEKPTEEEISENRR) the composition is skewed to basic and acidic residues.

This sequence belongs to the methyltransferase superfamily. RsmH family.

The protein resides in the cytoplasm. It carries out the reaction cytidine(1402) in 16S rRNA + S-adenosyl-L-methionine = N(4)-methylcytidine(1402) in 16S rRNA + S-adenosyl-L-homocysteine + H(+). In terms of biological role, specifically methylates the N4 position of cytidine in position 1402 (C1402) of 16S rRNA. The polypeptide is Ribosomal RNA small subunit methyltransferase H (Micrococcus luteus (strain ATCC 4698 / DSM 20030 / JCM 1464 / CCM 169 / CCUG 5858 / IAM 1056 / NBRC 3333 / NCIMB 9278 / NCTC 2665 / VKM Ac-2230) (Micrococcus lysodeikticus)).